Consider the following 43-residue polypeptide: Potassium channel toxin gamma-KTx 4.7 (43 aa).

4 disulfide bridges follow: C5-C23, C11-C34, C20-C39, and C24-C41.

Belongs to the ergtoxin family. Gamma-KTx 4 subfamily. Expressed by the venom gland.

It localises to the secreted. Functionally, reversibly blocks Kv11/ERG potassium channels. The protein is Potassium channel toxin gamma-KTx 4.7 of Centruroides limpidus (Mexican scorpion).